The following is a 428-amino-acid chain: Glutamate-1-semialdehyde 2,1-aminomutase 1 (428 aa).

Lys-268 carries the post-translational modification N6-(pyridoxal phosphate)lysine.

This sequence belongs to the class-III pyridoxal-phosphate-dependent aminotransferase family. HemL subfamily. In terms of assembly, homodimer. Pyridoxal 5'-phosphate serves as cofactor.

It is found in the cytoplasm. It carries out the reaction (S)-4-amino-5-oxopentanoate = 5-aminolevulinate. Its pathway is porphyrin-containing compound metabolism; protoporphyrin-IX biosynthesis; 5-aminolevulinate from L-glutamyl-tRNA(Glu): step 2/2. This Bacillus cereus (strain G9842) protein is Glutamate-1-semialdehyde 2,1-aminomutase 1.